The sequence spans 200 residues: Probable molybdenum cofactor guanylyltransferase (200 aa).

GTP-binding positions include 9–11 (LAG), Lys-21, Asp-69, and Asp-100. Asp-100 lines the Mg(2+) pocket.

The protein belongs to the MobA family. The cofactor is Mg(2+).

It is found in the cytoplasm. It carries out the reaction Mo-molybdopterin + GTP + H(+) = Mo-molybdopterin guanine dinucleotide + diphosphate. In terms of biological role, transfers a GMP moiety from GTP to Mo-molybdopterin (Mo-MPT) cofactor (Moco or molybdenum cofactor) to form Mo-molybdopterin guanine dinucleotide (Mo-MGD) cofactor. In Bacillus anthracis (strain CDC 684 / NRRL 3495), this protein is Probable molybdenum cofactor guanylyltransferase.